Consider the following 458-residue polypeptide: Estrogen-related receptor gamma (458 aa).

K40 participates in a covalent cross-link: Glycyl lysine isopeptide (Lys-Gly) (interchain with G-Cter in SUMO). The segment covering 42 to 52 (EPSSPASLTDS) has biased composition (polar residues). Residues 42–85 (EPSSPASLTDSVNHHSPGGSSDASGSYSSTMNGHQNGLDSPPLY) are disordered. Residue S45 is modified to Phosphoserine. The span at 57 to 70 (SPGGSSDASGSYSS) shows a compositional bias: low complexity. A DNA-binding region (nuclear receptor) is located at residues 125–200 (KRLCLVCGDI…VGMLKEGVRL (76 aa)). 2 NR C4-type zinc fingers span residues 128–148 (CLVC…CEAC) and 164–188 (CPAT…FMKC). The NR LBD domain occupies 233–457 (PYNKIVSHLL…KLFLEMLEAK (225 aa)).

The protein belongs to the nuclear hormone receptor family. NR3 subfamily. Homodimer. Binds TLE1, PNRC1 and PNRC2. Binds GRIP1. Interacts with NRIP1, NCOA1 and NCOR2. Acetylated by PCAF/KAT2 (in vitro). In terms of processing, sumoylation on Lys-40 is enhanced by phosphorylation at Ser-45 and represses transcriptional activity. Post-translationally, phosphorylation on Ser-45 enhances sumoylation on Lys-40 thus repressing transcriptional activity. As to expression, expressed in the heart, kidney, brain, lung, bone marrow, adrenal gland, trachea, spinal cord and thyroid gland.

It localises to the nucleus. Orphan receptor that acts as a transcription activator in the absence of bound ligand. Binds specifically to an estrogen response element and activates reporter genes controlled by estrogen response elements. Induces the expression of PERM1 in the skeletal muscle. This chain is Estrogen-related receptor gamma (ESRRG), found in Homo sapiens (Human).